The sequence spans 322 residues: Ferredoxin--NADP reductase (322 aa).

Leu-87, Phe-119, Asp-279, and Thr-320 together coordinate FAD.

This sequence belongs to the ferredoxin--NADP reductase type 2 family. As to quaternary structure, homodimer. The cofactor is FAD.

The enzyme catalyses 2 reduced [2Fe-2S]-[ferredoxin] + NADP(+) + H(+) = 2 oxidized [2Fe-2S]-[ferredoxin] + NADPH. This chain is Ferredoxin--NADP reductase, found in Streptococcus suis (strain 98HAH33).